A 461-amino-acid chain; its full sequence is tRNA modification GTPase MnmE (461 aa).

(6S)-5-formyl-5,6,7,8-tetrahydrofolate-binding residues include Arg-23, Glu-88, and Arg-127. One can recognise a TrmE-type G domain in the interval 223 to 383 (GLNTVIVGKP…LKECIKNLFF (161 aa)). A K(+)-binding site is contributed by Asn-233. GTP-binding positions include 233-238 (NVGKSS), 252-258 (TEIPGTT), and 277-280 (DTAG). Ser-237 is a Mg(2+) binding site. K(+) is bound by residues Thr-252, Ile-254, and Thr-257. Thr-258 contributes to the Mg(2+) binding site. (6S)-5-formyl-5,6,7,8-tetrahydrofolate is bound at residue Lys-461.

Belongs to the TRAFAC class TrmE-Era-EngA-EngB-Septin-like GTPase superfamily. TrmE GTPase family. Homodimer. Heterotetramer of two MnmE and two MnmG subunits. K(+) serves as cofactor.

It is found in the cytoplasm. Exhibits a very high intrinsic GTPase hydrolysis rate. Involved in the addition of a carboxymethylaminomethyl (cmnm) group at the wobble position (U34) of certain tRNAs, forming tRNA-cmnm(5)s(2)U34. The polypeptide is tRNA modification GTPase MnmE (Clostridium botulinum (strain Loch Maree / Type A3)).